The sequence spans 320 residues: Cytochrome f (320 aa).

A signal peptide spans Met-1 to Ala-35. Residues Tyr-36, Cys-56, Cys-59, and His-60 each coordinate heme. A helical transmembrane segment spans residues Val-286 to Lys-306.

This sequence belongs to the cytochrome f family. The 4 large subunits of the cytochrome b6-f complex are cytochrome b6, subunit IV (17 kDa polypeptide, petD), cytochrome f and the Rieske protein, while the 4 small subunits are PetG, PetL, PetM and PetN. The complex functions as a dimer. Heme serves as cofactor.

It is found in the plastid. The protein resides in the chloroplast thylakoid membrane. In terms of biological role, component of the cytochrome b6-f complex, which mediates electron transfer between photosystem II (PSII) and photosystem I (PSI), cyclic electron flow around PSI, and state transitions. This is Cytochrome f from Nicotiana sylvestris (Wood tobacco).